A 109-amino-acid chain; its full sequence is uncharacterized protein (109 aa).

A helical transmembrane segment spans residues Met75–Val95.

It is found in the membrane. This is an uncharacterized protein from Saccharomyces cerevisiae (strain ATCC 204508 / S288c) (Baker's yeast).